The primary structure comprises 169 residues: 6,7-dimethyl-8-ribityllumazine synthase (169 aa).

5-amino-6-(D-ribitylamino)uracil contacts are provided by residues W27, 61–63, and 90–92; these read SYE and VLI. 95–96 provides a ligand contact to (2S)-2-hydroxy-3-oxobutyl phosphate; it reads ST. Catalysis depends on H98, which acts as the Proton donor. F123 provides a ligand contact to 5-amino-6-(D-ribitylamino)uracil. Position 137 (R137) interacts with (2S)-2-hydroxy-3-oxobutyl phosphate.

The protein belongs to the DMRL synthase family. Homopentamer.

The protein localises to the mitochondrion intermembrane space. It catalyses the reaction (2S)-2-hydroxy-3-oxobutyl phosphate + 5-amino-6-(D-ribitylamino)uracil = 6,7-dimethyl-8-(1-D-ribityl)lumazine + phosphate + 2 H2O + H(+). It participates in cofactor biosynthesis; riboflavin biosynthesis; riboflavin from 2-hydroxy-3-oxobutyl phosphate and 5-amino-6-(D-ribitylamino)uracil: step 1/2. Functionally, catalyzes the formation of 6,7-dimethyl-8-ribityllumazine by condensation of 5-amino-6-(D-ribitylamino)uracil with 3,4-dihydroxy-2-butanone 4-phosphate. This is the penultimate step in the biosynthesis of riboflavin. The sequence is that of 6,7-dimethyl-8-ribityllumazine synthase (RIB4) from Saccharomyces cerevisiae (strain ATCC 204508 / S288c) (Baker's yeast).